We begin with the raw amino-acid sequence, 292 residues long: Hydroxysqualene synthase (292 aa).

It belongs to the phytoene/squalene synthase family. HpnC subfamily.

It carries out the reaction presqualene diphosphate + H2O = hydroxysqualene + diphosphate. The protein operates within secondary metabolite biosynthesis; hopanoid biosynthesis. Its function is as follows. Involved in the biosynthesis of the hopanoid precursor squalene (SQ) from farnesyl diphosphate (FPP). Catalyzes the second step, the conversion of presqualene diphosphate (PSPP) to hydroxysqualene (HSQ). The sequence is that of Hydroxysqualene synthase from Sinorhizobium fredii (strain NBRC 101917 / NGR234).